Consider the following 1274-residue polypeptide: MGNTDSKSSSILLNHCIALVRPEDADASSPSRTSSPSPSLSVDADPLSLNLSIFKLDSGPDVEALFSDKPNVPLDTVFNDFYLDFISVDVQDFSINSSFKKILHIISSLNPPNFNNLIVFLSLYIILSANSLPASRTGLHSSRLINAIKTLSILIPIYFDRVKSSTQDHYDVFWATQHEIEGLPLQNIPLGERLLLAILKLAFQDNFTTAVTAHPSELWEIGILTNSNKYRSLLNMHHQWHLFANRLLLLRLLAALFSSDLYTSGGKQDINMFLVYWCTQMPKDKSIQFTSSLLNCTMRFILNNNKDFQSLKANFFSSDATASNWQTLYFQFVQSCLHVLNLSMSYKAQDNVITIFLTQLQREYDLKLILSSFIKIFKYPIDLAIEQESNIFNFTNNKHIDASRRRAVSTSSHDNSSSSHASLPSSSSAAYHTKPQTKPQLPEIHPLLIPMTILMTNLIDCNKCFQNYFADKFASRFIIFSIYYLKYYDYSSLSSSSSTTRSNSSTTSNGTSNDTSNERSIVELNENSVSQILLPLLNHLLLILTSKKLVLFKMLQTFNLNYYTNNLPNFYKLSNINGDINNLTFRDFTVIQLSNLILDNIKFNLQPNPIFYELIYNLLPINDEILTSSHKNDDSHDDLILLSAKKKSASPSAATSSHTSSSKLSYNAAMSLLYVLSKSSNKVYLTTYATPVFKTKDIPYMISPGFKMDLLALLLRSITIFFTLYFDDAENLLFAMVRHQSITHQINDSINSISKALDMNPNLNSHIMTLKQMGFNRKVQWKDFYQFEEITDLPQVNLYSSANQQHQNQQQGQNDNRGQNQNEDPGQENESPTPYLLFNPASLENETPGTVKHFSSTNHDKNYQVIAFIDFKSDSNLNLQHQLEYWPHRPQWPTPLTFTHKCKNPKYENFNEVWSGTVYLQILLRVIKQILSKVPEIPRIKSVQYFETLSKLSALRSDILTTIHPRLPLDVRRLTTFQPLSMHTNDKLLMWFHIATWANIFTQTSFKYEETFSHELRQFESLLDISIDECEGNTISKPTTDRLGYIRRSRGQSSVSLERTISAGSGVSTPTMALNRTKSNGSGNLMNYFFQNTAQNHFQHLRSSSSSSSITLEKTTSNSSSIRTRPNSHHVAPETNNNNSTNGNSNNSSNGGFSFFKWKWGGNNSNGGSDDTKASQRDPNVSTSIITDNLNSYMFEEEISPGVVNNIIENNIWVGTDIRLFKIANFRKESFSFLEMTSSFFKKFKFINSDNDNYNNNEFDDNTQLRYTSRGLYR.

3 disordered regions span residues 23–42 (EDADASSPSRTSSPSPSLSV), 405–439 (RRAVSTSSHDNSSSSHASLPSSSSAAYHTKPQTKP), and 494–517 (SSSSSTTRSNSSTTSNGTSNDTSN). Low complexity-rich tracts occupy residues 27 to 42 (ASSPSRTSSPSPSLSV), 409 to 432 (STSSHDNSSSSHASLPSSSSAAYH), and 494 to 515 (SSSSSTTRSNSSTTSNGTSNDT). A Phosphoserine modification is found at S635. Low complexity predominate over residues 803 to 822 (NQQHQNQQQGQNDNRGQNQN). The interval 803 to 842 (NQQHQNQQQGQNDNRGQNQNEDPGQENESPTPYLLFNPAS) is disordered. A Phosphoserine modification is found at S1065. The interval 1100-1149 (HLRSSSSSSSITLEKTTSNSSSIRTRPNSHHVAPETNNNNSTNGNSNNSS) is disordered. Positions 1110–1125 (ITLEKTTSNSSSIRTR) are enriched in polar residues. Low complexity predominate over residues 1135–1149 (TNNNNSTNGNSNNSS).

It localises to the cytoplasm. Seems to be involved in cell wall organization and biogenesis. The protein is Protein ECM30 (ECM30) of Saccharomyces cerevisiae (strain ATCC 204508 / S288c) (Baker's yeast).